The chain runs to 240 residues: MYLRRAVSKTLALPLRAPPGPAPLRKDASLRWISSNKFPGSSGSNMIYYLVVGVTVSAGGYYTYKRVTSGKAKRSDHVTDLKEKTKAELQPPQGEKENLVGAEEASLEAPEVSSTEASPVVTEDIPDAPAVVGKEAPPCPDDAEAAPSETVVVGAEPKPEMTDAATVETTEVSTETTSEVTSTGPEEAAAVDSAEGTTENESPGECAELEENSPVESESSAGEDLQEEACAGSEAASAQG.

Residues 1 to 45 (MYLRRAVSKTLALPLRAPPGPAPLRKDASLRWISSNKFPGSSGSN) are Cytoplasmic-facing. Residues 46–64 (MIYYLVVGVTVSAGGYYTY) form a helical; Anchor for type IV membrane protein membrane-spanning segment. The Mitochondrial intermembrane segment spans residues 65 to 240 (KRVTSGKAKR…AGSEAASAQG (176 aa)). The disordered stretch occupies residues 72-240 (AKRSDHVTDL…AGSEAASAQG (169 aa)). Residues 73–87 (KRSDHVTDLKEKTKA) show a composition bias toward basic and acidic residues. Composition is skewed to low complexity over residues 166-183 (TVETTEVSTETTSEVTST) and 228-240 (EACAGSEAASAQG).

As to quaternary structure, interacts with RHOT1/Miro-1, RHOT2/Miro-2, TRAK1/OIP106 and TRAK2/GRIF1.

Its subcellular location is the mitochondrion. It localises to the mitochondrion outer membrane. The protein localises to the mitochondrion inner membrane. Plays a role in the trafficking of mitochondria along microtubules. Regulates the kinesin-mediated axonal transport of mitochondria to nerve terminals along microtubules during hypoxia. Participates in the translocation of TRAK2/GRIF1 from the cytoplasm to the mitochondrion. Also plays a role in steroidogenesis through maintenance of mitochondrial abundance and morphology. Plays an inhibitory role during neocortex development by regulating mitochondrial morphology, distribution and motility in neocortical neurons. The chain is Protein MGARP (MGARP) from Bos taurus (Bovine).